A 322-amino-acid chain; its full sequence is Transaldolase (322 aa).

K136 acts as the Schiff-base intermediate with substrate in catalysis.

This sequence belongs to the transaldolase family. Type 1 subfamily. Homodimer.

The protein resides in the cytoplasm. The enzyme catalyses D-sedoheptulose 7-phosphate + D-glyceraldehyde 3-phosphate = D-erythrose 4-phosphate + beta-D-fructose 6-phosphate. Its pathway is carbohydrate degradation; pentose phosphate pathway; D-glyceraldehyde 3-phosphate and beta-D-fructose 6-phosphate from D-ribose 5-phosphate and D-xylulose 5-phosphate (non-oxidative stage): step 2/3. Its function is as follows. Transaldolase is important for the balance of metabolites in the pentose-phosphate pathway. The polypeptide is Transaldolase (Xanthomonas oryzae pv. oryzae (strain MAFF 311018)).